We begin with the raw amino-acid sequence, 446 residues long: UDP-N-acetylmuramate--L-alanine ligase (446 aa).

122 to 128 (GTHGKTT) provides a ligand contact to ATP.

The protein belongs to the MurCDEF family.

The protein resides in the cytoplasm. The enzyme catalyses UDP-N-acetyl-alpha-D-muramate + L-alanine + ATP = UDP-N-acetyl-alpha-D-muramoyl-L-alanine + ADP + phosphate + H(+). The protein operates within cell wall biogenesis; peptidoglycan biosynthesis. Functionally, cell wall formation. The polypeptide is UDP-N-acetylmuramate--L-alanine ligase (Nocardioides sp. (strain ATCC BAA-499 / JS614)).